The primary structure comprises 105 residues: uncharacterized protein (105 aa).

A signal peptide spans 1-19; the sequence is MKLVFIFATAAIMGVVVYG.

This is an uncharacterized protein from Magallana gigas (Pacific oyster).